The chain runs to 163 residues: General stress protein 16O (163 aa).

Basic and acidic residues predominate over residues 19 to 30; that stretch reads QKELSGEKKETE. Disordered regions lie at residues 19–55 and 115–163; these read QKEL…TLVT and ADVE…QDSK. Residues 89 to 123 form a dksA C4-type; degenerate zinc finger; the sequence is CEKTGQEIPYERLEAVPYARMTVEAQADVEDDLET. Residues 127–146 show a composition bias toward basic and acidic residues; the sequence is SYEREFHEQVKDLSNKETID.

The protein is General stress protein 16O (yocK) of Bacillus subtilis (strain 168).